Consider the following 374-residue polypeptide: N5-carboxyaminoimidazole ribonucleotide synthase (374 aa).

ATP contacts are provided by residues R108, K148, 153–159 (GYDGKGQ), 183–186 (EKYL), E191, H214, and 266–267 (NE). Residues 112 to 296 (KETLKSAGTK…QFDTHILAVT (185 aa)) form the ATP-grasp domain.

The protein belongs to the PurK/PurT family. Homodimer.

The catalysed reaction is 5-amino-1-(5-phospho-beta-D-ribosyl)imidazole + hydrogencarbonate + ATP = 5-carboxyamino-1-(5-phospho-D-ribosyl)imidazole + ADP + phosphate + 2 H(+). Its pathway is purine metabolism; IMP biosynthesis via de novo pathway; 5-amino-1-(5-phospho-D-ribosyl)imidazole-4-carboxylate from 5-amino-1-(5-phospho-D-ribosyl)imidazole (N5-CAIR route): step 1/2. Its function is as follows. Catalyzes the ATP-dependent conversion of 5-aminoimidazole ribonucleotide (AIR) and HCO(3)(-) to N5-carboxyaminoimidazole ribonucleotide (N5-CAIR). This chain is N5-carboxyaminoimidazole ribonucleotide synthase, found in Staphylococcus aureus (strain MSSA476).